We begin with the raw amino-acid sequence, 187 residues long: Peptidyl-tRNA hydrolase (187 aa).

TRNA is bound at residue Y14. H19 serves as the catalytic Proton acceptor. The tRNA site is built by Y60, N62, and N108.

This sequence belongs to the PTH family. Monomer.

Its subcellular location is the cytoplasm. It carries out the reaction an N-acyl-L-alpha-aminoacyl-tRNA + H2O = an N-acyl-L-amino acid + a tRNA + H(+). Its function is as follows. Hydrolyzes ribosome-free peptidyl-tRNAs (with 1 or more amino acids incorporated), which drop off the ribosome during protein synthesis, or as a result of ribosome stalling. Catalyzes the release of premature peptidyl moieties from peptidyl-tRNA molecules trapped in stalled 50S ribosomal subunits, and thus maintains levels of free tRNAs and 50S ribosomes. The sequence is that of Peptidyl-tRNA hydrolase from Mycoplasmopsis synoviae (strain 53) (Mycoplasma synoviae).